Reading from the N-terminus, the 377-residue chain is Metallo-hydrolase mfmC (377 aa).

Zn(2+)-binding residues include H126, H128, D130, H131, H209, and D233.

Belongs to the metallo-beta-lactamase superfamily.

It participates in secondary metabolite biosynthesis; terpenoid biosynthesis. Functionally, metallo-hydrolase; part of the gene cluster that mediates the biosynthesis of the phthalide-terpenoid hybrid 11'-O-desmethylfendlerol. Within the pathway, mfma and mfmC act together to convert 3,5-dimethylorsellinic acid (DMOA) into the phthalide 5,7-dihydroxy-4-(hydroxymethyl)-6-methylphthalide. The biosynthesis of 11'-O-desmethylfendlerol begins with the NR-PKS mfmB that forms 3,5-dimethylorsellinic acid (DMOA), which is then transformed into the phthalide 5,7-dihydroxy-4-(hydroxymethyl)-6-methylphthalide by the cytochrome P450 monooxygenase mfmA and the hydrolase mfmC. Subsequently, the methyltransferase mfmE catalyzes 7-O-methylation to yield 5-hydroxy-4-(hydroxymethyl)-7-methoxy-6-methylphthalide, which undergoes C-3 hydroxylation by the cytochrome P450 monooxygenase mfmF. The resultant cyclopolic acid (2,5-dihydroxy-4-(hydroxymethyl)-7-methoxy-6-methylphthalide) is then farnesylated by the DMATS-type prenyltransferase mfmD to afford 5-O-farnesylcyclopolic acid. Finally, the Pyr4-family terpene cyclase mfmH cyclizes the farnesyl moiety of 5-O-farnesylcyclopolic acid into a drimane-like structure, thus completing the biosynthesis of 11'-O-desmethylfendlerol. In Annulohypoxylon moriforme (Filamentous fungus), this protein is Metallo-hydrolase mfmC.